A 200-amino-acid polypeptide reads, in one-letter code: Imidazole glycerol phosphate synthase subunit HisH (200 aa).

Residues 3–200 form the Glutamine amidotransferase type-1 domain; the sequence is DVALIDAGGA…LHNFLEMSFP (198 aa). Cysteine 78 acts as the Nucleophile in catalysis. Residues histidine 179 and glutamate 181 contribute to the active site.

As to quaternary structure, heterodimer of HisH and HisF.

The protein localises to the cytoplasm. It carries out the reaction 5-[(5-phospho-1-deoxy-D-ribulos-1-ylimino)methylamino]-1-(5-phospho-beta-D-ribosyl)imidazole-4-carboxamide + L-glutamine = D-erythro-1-(imidazol-4-yl)glycerol 3-phosphate + 5-amino-1-(5-phospho-beta-D-ribosyl)imidazole-4-carboxamide + L-glutamate + H(+). The enzyme catalyses L-glutamine + H2O = L-glutamate + NH4(+). It participates in amino-acid biosynthesis; L-histidine biosynthesis; L-histidine from 5-phospho-alpha-D-ribose 1-diphosphate: step 5/9. In terms of biological role, IGPS catalyzes the conversion of PRFAR and glutamine to IGP, AICAR and glutamate. The HisH subunit catalyzes the hydrolysis of glutamine to glutamate and ammonia as part of the synthesis of IGP and AICAR. The resulting ammonia molecule is channeled to the active site of HisF. This chain is Imidazole glycerol phosphate synthase subunit HisH, found in Xanthomonas oryzae pv. oryzae (strain MAFF 311018).